Reading from the N-terminus, the 270-residue chain is Protein N-terminal and lysine N-methyltransferase EFM7 (270 aa).

Residues Met-1–Lys-45 are disordered. Residues Trp-63, Gly-89–Ala-91, Asp-111, Trp-158, and Ser-182 contribute to the S-adenosyl-L-methionine site.

The protein belongs to the class I-like SAM-binding methyltransferase superfamily. EFM7 family.

Its subcellular location is the cytoplasm. Its function is as follows. S-adenosyl-L-methionine-dependent protein methyltransferase that trimethylates the N-terminal glycine 'Gly-2' of elongation factor 1-alpha, before also catalyzing the mono- and dimethylation of 'Lys-3'. This is Protein N-terminal and lysine N-methyltransferase EFM7 from Kluyveromyces lactis (strain ATCC 8585 / CBS 2359 / DSM 70799 / NBRC 1267 / NRRL Y-1140 / WM37) (Yeast).